The sequence spans 138 residues: Nucleoside diphosphate kinase (138 aa).

Residues Lys10, Phe58, Arg86, Thr92, Arg103, and Asn113 each contribute to the ATP site. The active-site Pros-phosphohistidine intermediate is the His116.

The protein belongs to the NDK family. In terms of assembly, homotetramer. The cofactor is Mg(2+).

It is found in the cytoplasm. It catalyses the reaction a 2'-deoxyribonucleoside 5'-diphosphate + ATP = a 2'-deoxyribonucleoside 5'-triphosphate + ADP. It carries out the reaction a ribonucleoside 5'-diphosphate + ATP = a ribonucleoside 5'-triphosphate + ADP. In terms of biological role, major role in the synthesis of nucleoside triphosphates other than ATP. The ATP gamma phosphate is transferred to the NDP beta phosphate via a ping-pong mechanism, using a phosphorylated active-site intermediate. This chain is Nucleoside diphosphate kinase, found in Haemophilus ducreyi (strain 35000HP / ATCC 700724).